Here is a 224-residue protein sequence, read N- to C-terminus: MALLSIRNVFKSYFLHGKRIDILRGVSLDIQRGELVSLVGASGAGKSTFLHVLGTLDAPAAGEVMFEDRSVFSMNDAEIAEFRNQTIGFVFQSHFLLPEFTALENVAMPALIRRQDRTAAYAYARELLERVGLGHRVDHRPGELSGGEAQRVALARALVLKPAVLLADEPTGNLDPATGEGIHQLLREVNREQGITAVVVTHNETLARSMPRRLRLAGGEVSEA.

An ABC transporter domain is found at 4-224 (LSIRNVFKSY…RLAGGEVSEA (221 aa)). 40-47 (GASGAGKS) is a binding site for ATP.

This sequence belongs to the ABC transporter superfamily. Lipoprotein translocase (TC 3.A.1.125) family. In terms of assembly, the complex is composed of two ATP-binding proteins (LolD) and two transmembrane proteins (LolC and LolE).

Its subcellular location is the cell inner membrane. Part of the ABC transporter complex LolCDE involved in the translocation of mature outer membrane-directed lipoproteins, from the inner membrane to the periplasmic chaperone, LolA. Responsible for the formation of the LolA-lipoprotein complex in an ATP-dependent manner. This chain is Lipoprotein-releasing system ATP-binding protein LolD, found in Myxococcus xanthus (strain DK1622).